Consider the following 168-residue polypeptide: ATP synthase subunit b (168 aa).

Residues 9-29 traverse the membrane as a helical segment; that stretch reads LFNLSTFVFTIINLLVLYYIL.

The protein belongs to the ATPase B chain family. As to quaternary structure, F-type ATPases have 2 components, F(1) - the catalytic core - and F(0) - the membrane proton channel. F(1) has five subunits: alpha(3), beta(3), gamma(1), delta(1), epsilon(1). F(0) has three main subunits: a(1), b(2) and c(10-14). The alpha and beta chains form an alternating ring which encloses part of the gamma chain. F(1) is attached to F(0) by a central stalk formed by the gamma and epsilon chains, while a peripheral stalk is formed by the delta and b chains.

Its subcellular location is the cell membrane. F(1)F(0) ATP synthase produces ATP from ADP in the presence of a proton or sodium gradient. F-type ATPases consist of two structural domains, F(1) containing the extramembraneous catalytic core and F(0) containing the membrane proton channel, linked together by a central stalk and a peripheral stalk. During catalysis, ATP synthesis in the catalytic domain of F(1) is coupled via a rotary mechanism of the central stalk subunits to proton translocation. In terms of biological role, component of the F(0) channel, it forms part of the peripheral stalk, linking F(1) to F(0). This Caldanaerobacter subterraneus subsp. tengcongensis (strain DSM 15242 / JCM 11007 / NBRC 100824 / MB4) (Thermoanaerobacter tengcongensis) protein is ATP synthase subunit b.